Reading from the N-terminus, the 384-residue chain is Thylakoid membrane protein TERC, chloroplastic (384 aa).

The N-terminal 48 residues, 1–48 (MSLASVIHHGILPPAKSDRIFLTIPVFPPDFRARGWTKSPFSLLINPS), are a transit peptide targeting the chloroplast. Topologically, residues 49–115 (LASAANRRLS…DYQQEETYKT (67 aa)) are stromal. The interval 68-104 (GIDQEDEEKESRELLPHKNDENATTSRSSSSVDSGGL) is disordered. Residues 76-88 (KESRELLPHKNDE) are compositionally biased toward basic and acidic residues. Residues 116 to 136 (SFKTVALCVGTAVAFGIGIGL) traverse the membrane as a helical segment. At 137–145 (KEGVGKASE) the chain is on the lumenal, thylakoid side. A helical membrane pass occupies residues 146–166 (FFAGYILEQSLSVDNLFVFVL). Residues 167 to 180 (VFKYFKVPLMYQNK) lie on the Stromal side of the membrane. Residues 181–201 (VLTYGIAGAIVFRFTLILLGT) traverse the membrane as a helical segment. The Lumenal, thylakoid portion of the chain corresponds to 202–206 (ATLQK). The chain crosses the membrane as a helical span at residues 207-227 (FEAVNLLLAAVLLYSSFKLFA). At 228–275 (SEEDDTDLSDNFIVKTCQRFIPVTSSYDGNRFFTKHDGILKATPLLLT) the chain is on the stromal side. The chain crosses the membrane as a helical span at residues 276-296 (VAVIELSDIAFAVDSIPAVFG). Topologically, residues 297–301 (VTRDP) are lumenal, thylakoid. Residues 302 to 322 (FIVLTSNLFAILGLRSLYTLI) traverse the membrane as a helical segment. At 323–335 (SEGMDELEYLQPS) the chain is on the stromal side. A helical membrane pass occupies residues 336–356 (IAVVLGFIGVKMILDFFGFHI). Position 357 (Ser357) is a topological domain, lumenal, thylakoid. A helical transmembrane segment spans residues 358 to 378 (TEASLGVVALSLSTGVLLSLT). Residues 379–384 (NKSSDS) lie on the Stromal side of the membrane.

As to quaternary structure, interacts with ALB3. Expressed in roots, rosette and cauline leaves, stems and flowers.

The protein resides in the plastid. Its subcellular location is the chloroplast thylakoid membrane. Its function is as follows. Integral thylakoid membrane protein that plays a crucial role in thylakoid membrane biogenesis and thylakoid formation in early chloroplast development. Is essential for de novo synthesis of photosystem II (PSII) core proteins and required for efficient insertion of thylakoid membrane proteins, presumably via interaction with ALB3. May assist synthesis of thylakoid membrane proteins at the membrane insertion step. This is Thylakoid membrane protein TERC, chloroplastic from Arabidopsis thaliana (Mouse-ear cress).